A 545-amino-acid chain; its full sequence is DnaJ homolog subfamily C member 21 (545 aa).

In terms of domain architecture, J spans C3–R69. 4 disordered regions span residues E122–E141, E276–V302, S331–N497, and H522–R545. Composition is skewed to acidic residues over residues E129 to E141 and D283 to E295. Residues R180 to D286 are a coiled coil. The segment at L323–H347 adopts a C2H2-type 1 zinc-finger fold. A compositionally biased stretch (basic residues) spans K339–R348. Over residues R372–N388 the composition is skewed to acidic residues. The span at K394–Q406 shows a compositional bias: basic residues. Residues L498–H522 form a C2H2-type 2 zinc finger. Positions S535–R545 are enriched in basic residues.

Functionally, may act as a co-chaperone for HSP70. This chain is DnaJ homolog subfamily C member 21 (dnajc21), found in Danio rerio (Zebrafish).